Reading from the N-terminus, the 308-residue chain is Protein translocase subunit SecF (308 aa).

A run of 6 helical transmembrane segments spans residues 18–38 (AYVF…TRGL), 134–154 (GAIY…LIRF), 160–180 (LGAV…FSLL), 193–213 (TIIA…VVVF), 244–264 (IITS…GGEV), and 272–292 (LIVG…PVVI).

Belongs to the SecD/SecF family. SecF subfamily. As to quaternary structure, forms a complex with SecD. Part of the essential Sec protein translocation apparatus which comprises SecA, SecYEG and auxiliary proteins SecDF. Other proteins may also be involved.

It localises to the cell inner membrane. In terms of biological role, part of the Sec protein translocase complex. Interacts with the SecYEG preprotein conducting channel. SecDF uses the proton motive force (PMF) to complete protein translocation after the ATP-dependent function of SecA. The sequence is that of Protein translocase subunit SecF from Rhodothermus marinus (strain ATCC 43812 / DSM 4252 / R-10) (Rhodothermus obamensis).